The primary structure comprises 39 residues: Large ribosomal subunit protein bL36 (39 aa).

The protein belongs to the bacterial ribosomal protein bL36 family.

In Levilactobacillus brevis (strain ATCC 367 / BCRC 12310 / CIP 105137 / JCM 1170 / LMG 11437 / NCIMB 947 / NCTC 947) (Lactobacillus brevis), this protein is Large ribosomal subunit protein bL36.